Consider the following 411-residue polypeptide: ATPase family AAA domain-containing protein 3C (411 aa).

An ATP-binding site is contributed by 177–184 (GPPGTGKT).

The protein belongs to the AAA ATPase family.

The polypeptide is ATPase family AAA domain-containing protein 3C (ATAD3C) (Homo sapiens (Human)).